The chain runs to 829 residues: Protein SEY1 homolog 2 (829 aa).

Positions 1 to 21 (MDEVSPTKHFTSKPLLPTKTP) are disordered. At 1-728 (MDEVSPTKHF…EKENSEIKYQ (728 aa)) the chain is on the cytoplasmic side. The 223-residue stretch at 83–305 (GMDYNAVGIL…FLPQYNKEIP (223 aa)) folds into the GB1/RHD3-type G domain. Position 93 to 100 (93 to 100 (GAQSSGKS)) interacts with GTP. 2 coiled-coil regions span residues 372-396 (KKIM…YMES) and 576-596 (DTIE…IKEL). The helical transmembrane segment at 729-749 (IPLYLIVLVIFFGFDEFIAIL) threads the bilayer. The Lumenal segment spans residues 750–752 (TNP). A helical membrane pass occupies residues 753–773 (LLFILTLIIGGGIYIGYKLNL). The Cytoplasmic segment spans residues 774-829 (GGVAKNYIQYLLSMSLSSTMEYLRTIPFFTPLIDKIWPKDDNKDDDSTEETQEETK).

Belongs to the TRAFAC class dynamin-like GTPase superfamily. GB1/RHD3 GTPase family. RHD3 subfamily.

The protein resides in the endoplasmic reticulum membrane. Its function is as follows. Probable GTP-binding protein that may be involved in cell development. This Entamoeba dispar (strain ATCC PRA-260 / SAW760) protein is Protein SEY1 homolog 2.